A 158-amino-acid chain; its full sequence is MFRIGQGFDVHQLVEGRPLIIGGVTIPYEKGLLGHSDADVLLHAVADACLGAIGAGDIGRHFPDTDPRFKDADSAELLAHVWALARQEGYRLVNADCTIIAQKPKLAPYIEEMRAVIARLLEAERSQVNVKATTTEKLGFTGRGEGIAAQAVVLLQKS.

A divalent metal cation-binding residues include Asp9 and His11. Residues 9 to 11 and 35 to 36 contribute to the 4-CDP-2-C-methyl-D-erythritol 2-phosphate site; these read DVH and HS. A divalent metal cation is bound at residue His43. 4-CDP-2-C-methyl-D-erythritol 2-phosphate contacts are provided by residues 57–59, 62–66, 133–136, Phe140, and Arg143; these read DIG, FPDTD, and TTTE.

The protein belongs to the IspF family. As to quaternary structure, homotrimer. It depends on a divalent metal cation as a cofactor.

It carries out the reaction 4-CDP-2-C-methyl-D-erythritol 2-phosphate = 2-C-methyl-D-erythritol 2,4-cyclic diphosphate + CMP. Its pathway is isoprenoid biosynthesis; isopentenyl diphosphate biosynthesis via DXP pathway; isopentenyl diphosphate from 1-deoxy-D-xylulose 5-phosphate: step 4/6. In terms of biological role, involved in the biosynthesis of isopentenyl diphosphate (IPP) and dimethylallyl diphosphate (DMAPP), two major building blocks of isoprenoid compounds. Catalyzes the conversion of 4-diphosphocytidyl-2-C-methyl-D-erythritol 2-phosphate (CDP-ME2P) to 2-C-methyl-D-erythritol 2,4-cyclodiphosphate (ME-CPP) with a corresponding release of cytidine 5-monophosphate (CMP). The sequence is that of 2-C-methyl-D-erythritol 2,4-cyclodiphosphate synthase from Geobacillus kaustophilus (strain HTA426).